We begin with the raw amino-acid sequence, 360 residues long: UDP-N-acetylglucosamine--N-acetylmuramyl-(pentapeptide) pyrophosphoryl-undecaprenol N-acetylglucosamine transferase (360 aa).

Residues 12–14, serine 198, and glutamine 289 contribute to the UDP-N-acetyl-alpha-D-glucosamine site; that span reads TAG.

It belongs to the glycosyltransferase 28 family. MurG subfamily.

The protein resides in the cell membrane. The catalysed reaction is Mur2Ac(oyl-L-Ala-gamma-D-Glu-L-Lys-D-Ala-D-Ala)-di-trans,octa-cis-undecaprenyl diphosphate + UDP-N-acetyl-alpha-D-glucosamine = beta-D-GlcNAc-(1-&gt;4)-Mur2Ac(oyl-L-Ala-gamma-D-Glu-L-Lys-D-Ala-D-Ala)-di-trans,octa-cis-undecaprenyl diphosphate + UDP + H(+). It participates in cell wall biogenesis; peptidoglycan biosynthesis. Functionally, cell wall formation. Catalyzes the transfer of a GlcNAc subunit on undecaprenyl-pyrophosphoryl-MurNAc-pentapeptide (lipid intermediate I) to form undecaprenyl-pyrophosphoryl-MurNAc-(pentapeptide)GlcNAc (lipid intermediate II). The chain is UDP-N-acetylglucosamine--N-acetylmuramyl-(pentapeptide) pyrophosphoryl-undecaprenol N-acetylglucosamine transferase from Streptococcus equi subsp. zooepidemicus (strain MGCS10565).